The following is a 539-amino-acid chain: Berberine bridge enzyme-like 21 (539 aa).

The signal sequence occupies residues 1–26; it reads MIATQTFVSVFFFVFFLVSLPFFSSA. A disulfide bridge connects residues Cys41 and Cys104. N-linked (GlcNAc...) asparagine glycosylation occurs at Asn79. Positions 82-256 constitute an FAD-binding PCMH-type domain; the sequence is STPKPAIIVT…LGYKVKLVPV (175 aa). Positions 119-181 form a cross-link, 6-(S-cysteinyl)-8alpha-(pros-histidyl)-FAD (His-Cys); it reads HDYEGLSYIS…KVHGFPAGVC (63 aa). N-linked (GlcNAc...) asparagine glycosylation occurs at Asn340.

This sequence belongs to the oxygen-dependent FAD-linked oxidoreductase family. The cofactor is FAD. The FAD cofactor is bound via a bicovalent 6-S-cysteinyl, 8alpha-N1-histidyl FAD linkage.

The protein localises to the secreted. It localises to the cell wall. The sequence is that of Berberine bridge enzyme-like 21 from Arabidopsis thaliana (Mouse-ear cress).